We begin with the raw amino-acid sequence, 218 residues long: 7-cyano-7-deazaguanine synthase (218 aa).

9-19 (FSGGMDSFTVL) is a binding site for ATP. The Zn(2+) site is built by Cys185, Cys193, Cys196, and Cys199.

Belongs to the QueC family. Zn(2+) is required as a cofactor.

It carries out the reaction 7-carboxy-7-deazaguanine + NH4(+) + ATP = 7-cyano-7-deazaguanine + ADP + phosphate + H2O + H(+). Its pathway is purine metabolism; 7-cyano-7-deazaguanine biosynthesis. Functionally, catalyzes the ATP-dependent conversion of 7-carboxy-7-deazaguanine (CDG) to 7-cyano-7-deazaguanine (preQ(0)). The sequence is that of 7-cyano-7-deazaguanine synthase from Pseudoalteromonas atlantica (strain T6c / ATCC BAA-1087).